Consider the following 218-residue polypeptide: Riboflavin synthase (218 aa).

2 Lumazine-binding repeats span residues 1–97 (MFTG…FGGH) and 98–194 (IVSG…ERLL). Residues 4-6 (GII), 48-50 (CLT), 62-67 (DLSIET), 101-103 (GHV), Lys136, 145-147 (SLT), and 159-164 (TIVPHT) each bind 2,4-dihydroxypteridine.

As to quaternary structure, homotrimer.

It catalyses the reaction 2 6,7-dimethyl-8-(1-D-ribityl)lumazine + H(+) = 5-amino-6-(D-ribitylamino)uracil + riboflavin. It functions in the pathway cofactor biosynthesis; riboflavin biosynthesis; riboflavin from 2-hydroxy-3-oxobutyl phosphate and 5-amino-6-(D-ribitylamino)uracil: step 2/2. In terms of biological role, catalyzes the dismutation of two molecules of 6,7-dimethyl-8-ribityllumazine, resulting in the formation of riboflavin and 5-amino-6-(D-ribitylamino)uracil. This chain is Riboflavin synthase, found in Photobacterium phosphoreum.